Consider the following 95-residue polypeptide: Small ribosomal subunit protein uS17 (95 aa).

This sequence belongs to the universal ribosomal protein uS17 family. As to quaternary structure, part of the 30S ribosomal subunit.

Functionally, one of the primary rRNA binding proteins, it binds specifically to the 5'-end of 16S ribosomal RNA. The polypeptide is Small ribosomal subunit protein uS17 (Synechococcus sp. (strain CC9902)).